A 130-amino-acid polypeptide reads, in one-letter code: Early E3B 14.5 kDa protein (130 aa).

An N-terminal signal peptide occupies residues 1 to 19 (MKRIVTFVLLIFCALPVLC). The chain crosses the membrane as a helical span at residues 53–77 (AWLYAIISVMVFCSTIFALAIYPYL).

This sequence belongs to the adenoviridae E3_14 family. Post-translationally, phosphorylated on serine; O-glycosylated, but not N-glycosylated.

The protein resides in the host membrane. Down-regulates the EGF receptor and prevents cytolysis by TNF. This is Early E3B 14.5 kDa protein from Human adenovirus C serotype 6 (HAdV-6).